The sequence spans 209 residues: Guanylate kinase (209 aa).

The Guanylate kinase-like domain maps to 5–184 (GLLIVFSGPS…AAERVKRVIE (180 aa)). Position 12–19 (12–19 (GPSGVGKG)) interacts with ATP.

The protein belongs to the guanylate kinase family.

It is found in the cytoplasm. The catalysed reaction is GMP + ATP = GDP + ADP. In terms of biological role, essential for recycling GMP and indirectly, cGMP. The chain is Guanylate kinase from Streptococcus thermophilus (strain CNRZ 1066).